Consider the following 365-residue polypeptide: UDP-N-acetylglucosamine--N-acetylmuramyl-(pentapeptide) pyrophosphoryl-undecaprenol N-acetylglucosamine transferase (365 aa).

UDP-N-acetyl-alpha-D-glucosamine-binding positions include 17-19, Asn-129, Arg-167, Ser-194, Ile-250, 269-274, and Gln-295; these read TGG and ALTVSE.

The protein belongs to the glycosyltransferase 28 family. MurG subfamily.

The protein localises to the cell inner membrane. The catalysed reaction is di-trans,octa-cis-undecaprenyl diphospho-N-acetyl-alpha-D-muramoyl-L-alanyl-D-glutamyl-meso-2,6-diaminopimeloyl-D-alanyl-D-alanine + UDP-N-acetyl-alpha-D-glucosamine = di-trans,octa-cis-undecaprenyl diphospho-[N-acetyl-alpha-D-glucosaminyl-(1-&gt;4)]-N-acetyl-alpha-D-muramoyl-L-alanyl-D-glutamyl-meso-2,6-diaminopimeloyl-D-alanyl-D-alanine + UDP + H(+). Its pathway is cell wall biogenesis; peptidoglycan biosynthesis. Its function is as follows. Cell wall formation. Catalyzes the transfer of a GlcNAc subunit on undecaprenyl-pyrophosphoryl-MurNAc-pentapeptide (lipid intermediate I) to form undecaprenyl-pyrophosphoryl-MurNAc-(pentapeptide)GlcNAc (lipid intermediate II). This is UDP-N-acetylglucosamine--N-acetylmuramyl-(pentapeptide) pyrophosphoryl-undecaprenol N-acetylglucosamine transferase from Shewanella pealeana (strain ATCC 700345 / ANG-SQ1).